Reading from the N-terminus, the 102-residue chain is Chorion protein S15 (102 aa).

The signal sequence occupies residues 1 to 18 (MKFLIAFVAIAFFACVSA).

It belongs to the chorion protein S15/S18 family.

The protein resides in the secreted. In terms of biological role, chorion membrane (egg shell) protein; plays a role in protecting the egg from the environment. The protein is Chorion protein S15 (Cp15) of Drosophila grimshawi (Hawaiian fruit fly).